The sequence spans 365 residues: Cobalt-precorrin-5B C(1)-methyltransferase (365 aa).

It belongs to the CbiD family.

It catalyses the reaction Co-precorrin-5B + S-adenosyl-L-methionine = Co-precorrin-6A + S-adenosyl-L-homocysteine. It functions in the pathway cofactor biosynthesis; adenosylcobalamin biosynthesis; cob(II)yrinate a,c-diamide from sirohydrochlorin (anaerobic route): step 6/10. In terms of biological role, catalyzes the methylation of C-1 in cobalt-precorrin-5B to form cobalt-precorrin-6A. The polypeptide is Cobalt-precorrin-5B C(1)-methyltransferase (Paraburkholderia phytofirmans (strain DSM 17436 / LMG 22146 / PsJN) (Burkholderia phytofirmans)).